The sequence spans 679 residues: DNA-directed RNA polymerase subunit beta' (679 aa).

Cys-69, Cys-71, Cys-84, and Cys-87 together coordinate Zn(2+). Mg(2+) contacts are provided by Asp-486, Asp-488, and Asp-490.

The protein belongs to the RNA polymerase beta' chain family. RpoC1 subfamily. As to quaternary structure, in plastids the minimal PEP RNA polymerase catalytic core is composed of four subunits: alpha, beta, beta', and beta''. When a (nuclear-encoded) sigma factor is associated with the core the holoenzyme is formed, which can initiate transcription. Mg(2+) serves as cofactor. Requires Zn(2+) as cofactor.

It localises to the plastid. The protein resides in the chloroplast. It carries out the reaction RNA(n) + a ribonucleoside 5'-triphosphate = RNA(n+1) + diphosphate. In terms of biological role, DNA-dependent RNA polymerase catalyzes the transcription of DNA into RNA using the four ribonucleoside triphosphates as substrates. The chain is DNA-directed RNA polymerase subunit beta' from Physcomitrium patens (Spreading-leaved earth moss).